The following is a 342-amino-acid chain: BAG family molecular chaperone regulator 1 (342 aa).

Residues 1 to 41 (MMKMMRNKPTNLPTAGMTNGGRGSGGGGGGGGRESGGRDLE) are disordered. Residues 8–17 (KPTNLPTAGM) show a composition bias toward polar residues. Residues 18–34 (TNGGRGSGGGGGGGGRE) are compositionally biased toward gly residues. Residues 65-141 (PMIRVRIKYG…MVLIEDPLSQ (77 aa)) form the Ubiquitin-like domain. The BAG domain occupies 160-238 (AISDISLEVD…NYVETLDALK (79 aa)). S298 carries the phosphoserine modification.

As to quaternary structure, binds to the ATPase domain of HSP70/HSC70 chaperones.

In terms of biological role, co-chaperone that regulates diverse cellular pathways, such as programmed cell death and stress responses. This Arabidopsis thaliana (Mouse-ear cress) protein is BAG family molecular chaperone regulator 1 (BAG1).